Consider the following 380-residue polypeptide: Cytochrome b (380 aa).

A run of 4 helical transmembrane segments spans residues 34–54 (FGSL…LLAM), 78–99 (WLIR…YLHI), 114–134 (WNTG…GYVL), and 179–199 (FFAL…IHLT). Residues histidine 84 and histidine 98 each contribute to the heme b site. The heme b site is built by histidine 183 and histidine 197. Residue histidine 202 coordinates a ubiquinone. 4 consecutive transmembrane segments (helical) span residues 227-247 (TKDL…ALFS), 289-309 (LGGV…PFLH), 321-341 (LSQI…WVGS), and 348-368 (FIII…ILFP).

It belongs to the cytochrome b family. The cytochrome bc1 complex contains 11 subunits: 3 respiratory subunits (MT-CYB, CYC1 and UQCRFS1), 2 core proteins (UQCRC1 and UQCRC2) and 6 low-molecular weight proteins (UQCRH/QCR6, UQCRB/QCR7, UQCRQ/QCR8, UQCR10/QCR9, UQCR11/QCR10 and a cleavage product of UQCRFS1). This cytochrome bc1 complex then forms a dimer. It depends on heme b as a cofactor.

It localises to the mitochondrion inner membrane. Functionally, component of the ubiquinol-cytochrome c reductase complex (complex III or cytochrome b-c1 complex) that is part of the mitochondrial respiratory chain. The b-c1 complex mediates electron transfer from ubiquinol to cytochrome c. Contributes to the generation of a proton gradient across the mitochondrial membrane that is then used for ATP synthesis. This Aerodramus vulcanorum (Volcano swiftlet) protein is Cytochrome b (MT-CYB).